Reading from the N-terminus, the 327-residue chain is Phenylalanine--tRNA ligase alpha subunit (327 aa).

Glu252 is a Mg(2+) binding site.

This sequence belongs to the class-II aminoacyl-tRNA synthetase family. Phe-tRNA synthetase alpha subunit type 1 subfamily. In terms of assembly, tetramer of two alpha and two beta subunits. The cofactor is Mg(2+).

It localises to the cytoplasm. The enzyme catalyses tRNA(Phe) + L-phenylalanine + ATP = L-phenylalanyl-tRNA(Phe) + AMP + diphosphate + H(+). The protein is Phenylalanine--tRNA ligase alpha subunit of Shewanella denitrificans (strain OS217 / ATCC BAA-1090 / DSM 15013).